The primary structure comprises 875 residues: Metal transporter CNNM2 (875 aa).

At 1–250 the chain is on the extracellular side; that stretch reads MIGCGACEPE…TKMIVGEEKK (250 aa). The N-linked (GlcNAc...) asparagine glycan is linked to Asn-112. The segment at 122 to 148 is disordered; sequence EHERRRHTPGERGLGGPAPPEPDSGPQ. Residues 251–271 form a helical membrane-spanning segment; the sequence is FLLPFWLQVIFISLLLCLSGM. In terms of domain architecture, CNNM transmembrane spans 251–431; sequence FLLPFWLQVI…DPYNDLVKEE (181 aa). The Cytoplasmic segment spans residues 272 to 313; that stretch reads FSGLNLGLMALDPMELRIVQNCGTEKEKNYAKRIEPVRRQGN. Residues 314–334 constitute an intramembrane region (helical); sequence YLLCSLLLGNVLVNTTLTILL. Topologically, residues 335–338 are cytoplasmic; that stretch reads DDIA. Residues 339–359 traverse the membrane as a helical segment; it reads GSGLVAVVVSTIGIVIFGEIV. The Extracellular portion of the chain corresponds to 360-368; it reads PQAICSRHG. Residues 369–389 traverse the membrane as a helical segment; the sequence is LAVGANTIFLTKFFMMMTFPA. Topologically, residues 390 to 875 are cytoplasmic; it reads SYPVSKLLDC…NHSLHSEGAI (486 aa). 2 consecutive CBS domains span residues 450–511 and 518–584; these read MTPL…CTPL and YNHP…ILDE. The interval 741–763 is disordered; that stretch reads AGSPGENKSPPRPCGLNHSDSLS. Ser-761 is subject to Phosphoserine.

It belongs to the ACDP family.

The protein localises to the cell membrane. In terms of biological role, divalent metal cation transporter. Mediates transport of divalent metal cations in an order of Mg(2+) &gt; Co(2+) &gt; Mn(2+) &gt; Sr(2+) &gt; Ba(2+) &gt; Cu(2+) &gt; Fe(2+). This is Metal transporter CNNM2 (Cnnm2) from Rattus norvegicus (Rat).